A 1094-amino-acid chain; its full sequence is Transcriptional regulator CRZ1 (1094 aa).

Disordered regions lie at residues 1-29, 44-81, 93-428, and 477-519; these read MADP…STSS, FNSD…LDMM, GRRQ…FPPS, and RAGA…RTLS. Composition is skewed to basic and acidic residues over residues 60–78 and 94–103; these read QARK…KRYL and RRQESLRKES. Serine 103 is modified (phosphoserine). A compositionally biased stretch (low complexity) spans 148-159; that stretch reads PNQPQQPSQQPP. 2 stretches are compositionally biased toward polar residues: residues 166-187 and 201-217; these read SEQS…QSSG and GTTS…QISP. 2 stretches are compositionally biased toward low complexity: residues 228–241 and 252–262; these read QPPQ…QQQQ and EQQQQYAQGEG. Positions 286–324 are enriched in polar residues; sequence VISNTSHPSQYPSRTSSPFPQQSQSNMVPASTVNQTRTE. Phosphoserine occurs at positions 288 and 329. Over residues 325 to 342 the composition is skewed to low complexity; that stretch reads SFPASRSPSPFAPQQASQ. Polar residues-rich tracts occupy residues 343–379 and 396–412; these read TEAS…FNKP and IVTQ…LNQP. Residues 477–493 show a composition bias toward low complexity; the sequence is RAGAARGAQRQGPQGQG. Residues 507 to 519 show a composition bias toward polar residues; sequence PSPQSHPLPRTLS. 4 positions are modified to phosphoserine: serine 508, serine 569, serine 765, and serine 810. The segment at 835-888 is disordered; it reads ITGDDGSLLPPSNRGHAMSHSRHSSTSSIRSASPALSISSQGSSFSHHSPRMDM. Over residues 858–881 the composition is skewed to low complexity; that stretch reads SSTSSIRSASPALSISSQGSSFSH. Residues 944 to 968 form a C2H2-type 1 zinc finger; sequence FKCPVPGCGSTFTRHFNLKGHLRSH. The C2H2-type 2; degenerate zinc finger occupies 1007 to 1029; sequence FECEGCGKKFARLDALTRHHKSE. Residues 1037–1094 form a disordered region; the sequence is THPLPTNFDGSPMSESQYKTYKGIKSTPEGSGRRLSSTASGSGSGKRRSKKSETSEED.

Phosphorylated. Dephosphorylated by calcineurin (CNA1) which promotes nuclear localization.

The protein localises to the cytoplasm. Its subcellular location is the cytosol. The protein resides in the nucleus. Functionally, DNA-binding transcriptional activator that interacts with calcineurin-dependent response element (CDRE) promoters. Activates expression of genes required to maintain cell wall integrity during stress. Activates expression of genes required for transepithelial migration through the host blood-brain barrier. Required for adaptation to host temperature during infection. The protein is Transcriptional regulator CRZ1 of Cryptococcus neoformans var. grubii serotype A (strain H99 / ATCC 208821 / CBS 10515 / FGSC 9487) (Filobasidiella neoformans var. grubii).